A 185-amino-acid chain; its full sequence is Peptide deformylase (185 aa).

The Fe cation site is built by Cys94 and His136. Residue Glu137 is part of the active site. His140 lines the Fe cation pocket.

The protein belongs to the polypeptide deformylase family. Fe(2+) is required as a cofactor.

It catalyses the reaction N-terminal N-formyl-L-methionyl-[peptide] + H2O = N-terminal L-methionyl-[peptide] + formate. Removes the formyl group from the N-terminal Met of newly synthesized proteins. Requires at least a dipeptide for an efficient rate of reaction. N-terminal L-methionine is a prerequisite for activity but the enzyme has broad specificity at other positions. This Chlorobium limicola (strain DSM 245 / NBRC 103803 / 6330) protein is Peptide deformylase.